The sequence spans 349 residues: UDP-N-acetylenolpyruvoylglucosamine reductase (349 aa).

In terms of domain architecture, FAD-binding PCMH-type spans 25–213 (VGPVARRLVT…VEQGERTDPQ (189 aa)). Residue R165 is part of the active site. S242 functions as the Proton donor in the catalytic mechanism. The active site involves E341.

It belongs to the MurB family. It depends on FAD as a cofactor.

The protein localises to the cytoplasm. The catalysed reaction is UDP-N-acetyl-alpha-D-muramate + NADP(+) = UDP-N-acetyl-3-O-(1-carboxyvinyl)-alpha-D-glucosamine + NADPH + H(+). The protein operates within cell wall biogenesis; peptidoglycan biosynthesis. Cell wall formation. The chain is UDP-N-acetylenolpyruvoylglucosamine reductase from Mycolicibacterium gilvum (strain PYR-GCK) (Mycobacterium gilvum (strain PYR-GCK)).